The chain runs to 409 residues: DNA double-strand break repair protein Mre11 (409 aa).

Residues Asp9, His11, Asp50, and Glu85 each coordinate Mn(2+). Residue His86 is the Proton donor of the active site. Mn(2+) contacts are provided by His170, His199, and His201.

This sequence belongs to the MRE11/RAD32 family. As to quaternary structure, homodimer. Forms a heterotetramer composed of two Mre11 subunits and two Rad50 subunits. The cofactor is Mn(2+).

Nuclease activity is regulated by Rad50. Part of the Rad50/Mre11 complex, which is involved in the early steps of DNA double-strand break (DSB) repair. The complex may facilitate opening of the processed DNA ends to aid in the recruitment of HerA and NurA. Mre11 binds to DSB ends and has both double-stranded 3'-5' exonuclease activity and single-stranded endonuclease activity. This is DNA double-strand break repair protein Mre11 from Aeropyrum pernix (strain ATCC 700893 / DSM 11879 / JCM 9820 / NBRC 100138 / K1).